We begin with the raw amino-acid sequence, 195 residues long: MRVKATLINFKSKLSKSCNRFVSLFRFRVKRPVFIRPLRARHGNVKPRHQHHHSKKPICSCLCFLNSSKNHKMSNAKHRSSSFSVNDDDYSKFMQSPLTPATAKKLFTSPITTPYSSRTRKSLNARDTFEDNAVEDACRSFENYLIHLIVEEGKIDDLMDIEELLFCWKNLKSPVFIELVSRFYGELCRDLFSGE.

Residues 130–190 (EDNAVEDACR…SRFYGELCRD (61 aa)) enclose the OVATE domain.

It localises to the nucleus. Its function is as follows. Transcriptional repressor that may regulate multiple aspects of plant growth and development through the regulation of BEL1-LIKE (BLH) and KNOX TALE (KNAT) homeodomain transcription factors. The sequence is that of Transcription repressor OFP17 (OFP17) from Arabidopsis thaliana (Mouse-ear cress).